The primary structure comprises 232 residues: V-type ATP synthase subunit E (232 aa).

It belongs to the V-ATPase E subunit family.

Functionally, produces ATP from ADP in the presence of a proton gradient across the membrane. In Treponema pallidum (strain Nichols), this protein is V-type ATP synthase subunit E (atpE).